We begin with the raw amino-acid sequence, 291 residues long: BTB/POZ domain-containing protein 19 (291 aa).

The BTB domain maps to 29–98 (SDVCFVVGQE…LYTNSVKLYR (70 aa)). One can recognise a BACK domain in the interval 134-234 (CEALQVAVTF…LALLAPAELS (101 aa)).

In Homo sapiens (Human), this protein is BTB/POZ domain-containing protein 19 (BTBD19).